Reading from the N-terminus, the 363-residue chain is Phosphoribosylformylglycinamidine cyclo-ligase (363 aa).

The protein belongs to the AIR synthase family.

The protein resides in the cytoplasm. The catalysed reaction is 2-formamido-N(1)-(5-O-phospho-beta-D-ribosyl)acetamidine + ATP = 5-amino-1-(5-phospho-beta-D-ribosyl)imidazole + ADP + phosphate + H(+). The protein operates within purine metabolism; IMP biosynthesis via de novo pathway; 5-amino-1-(5-phospho-D-ribosyl)imidazole from N(2)-formyl-N(1)-(5-phospho-D-ribosyl)glycinamide: step 2/2. The sequence is that of Phosphoribosylformylglycinamidine cyclo-ligase from Parvibaculum lavamentivorans (strain DS-1 / DSM 13023 / NCIMB 13966).